We begin with the raw amino-acid sequence, 58 residues long: Basic phospholipase A2 homolog PocTX (58 aa).

Cysteine 29 and cysteine 45 are oxidised to a cystine.

In terms of tissue distribution, expressed by the venom gland.

It is found in the secreted. Wasp venom phospholipase A2 homolog that lacks enzymatic activity. The chain is Basic phospholipase A2 homolog PocTX from Polybia occidentalis (Paper wasp).